The chain runs to 228 residues: L-ribulose-5-phosphate 4-epimerase UlaF (228 aa).

Residues 26–27 (GN), 43–44 (SG), and 72–73 (SS) each bind substrate. Residues Asp-74, His-93, and His-95 each contribute to the Zn(2+) site. Catalysis depends on Asp-118, which acts as the Proton donor/acceptor. His-167 serves as a coordination point for Zn(2+). Catalysis depends on Tyr-225, which acts as the Proton donor/acceptor.

Belongs to the aldolase class II family. AraD/FucA subfamily. Requires Zn(2+) as cofactor.

The catalysed reaction is L-ribulose 5-phosphate = D-xylulose 5-phosphate. It participates in cofactor degradation; L-ascorbate degradation; D-xylulose 5-phosphate from L-ascorbate: step 4/4. Functionally, catalyzes the isomerization of L-ribulose 5-phosphate to D-xylulose 5-phosphate. Is involved in the anaerobic L-ascorbate utilization. The polypeptide is L-ribulose-5-phosphate 4-epimerase UlaF (Escherichia coli O139:H28 (strain E24377A / ETEC)).